The primary structure comprises 158 residues: Small ribosomal subunit protein uS19 (158 aa).

This sequence belongs to the universal ribosomal protein uS19 family.

Protein S19 forms a complex with S13 that binds strongly to the 16S ribosomal RNA. This chain is Small ribosomal subunit protein uS19, found in Pyrobaculum aerophilum (strain ATCC 51768 / DSM 7523 / JCM 9630 / CIP 104966 / NBRC 100827 / IM2).